Reading from the N-terminus, the 201-residue chain is Small ribosomal subunit protein uS4 (201 aa).

A disordered region spans residues 26-46; sequence LARRAYAPGDHGRDRRGKLSE. Residues 35 to 44 show a composition bias toward basic and acidic residues; that stretch reads DHGRDRRGKL. One can recognise an S4 RNA-binding domain in the interval 93–156; that stretch reads RRLDNMVYRL…KNLDIIKNAV (64 aa).

This sequence belongs to the universal ribosomal protein uS4 family. In terms of assembly, part of the 30S ribosomal subunit. Contacts protein S5. The interaction surface between S4 and S5 is involved in control of translational fidelity.

In terms of biological role, one of the primary rRNA binding proteins, it binds directly to 16S rRNA where it nucleates assembly of the body of the 30S subunit. With S5 and S12 plays an important role in translational accuracy. The polypeptide is Small ribosomal subunit protein uS4 (Limosilactobacillus reuteri (strain DSM 20016) (Lactobacillus reuteri)).